The following is a 401-amino-acid chain: 8-amino-7-oxononanoate synthase (401 aa).

Arg-24 contacts substrate. 111 to 112 (GF) is a pyridoxal 5'-phosphate binding site. His-137 contacts substrate. Pyridoxal 5'-phosphate is bound by residues Ser-183, His-211, and Thr-240. Lys-243 is modified (N6-(pyridoxal phosphate)lysine). Thr-357 is a substrate binding site.

The protein belongs to the class-II pyridoxal-phosphate-dependent aminotransferase family. BioF subfamily. Homodimer. It depends on pyridoxal 5'-phosphate as a cofactor.

The enzyme catalyses 6-carboxyhexanoyl-[ACP] + L-alanine + H(+) = (8S)-8-amino-7-oxononanoate + holo-[ACP] + CO2. It functions in the pathway cofactor biosynthesis; biotin biosynthesis. Its function is as follows. Catalyzes the decarboxylative condensation of pimeloyl-[acyl-carrier protein] and L-alanine to produce 8-amino-7-oxononanoate (AON), [acyl-carrier protein], and carbon dioxide. This Xanthomonas oryzae pv. oryzae (strain MAFF 311018) protein is 8-amino-7-oxononanoate synthase.